Consider the following 439-residue polypeptide: GTPase Obg (439 aa).

The 160-residue stretch at 5–164 folds into the Obg domain; sequence TDFFDQATIV…LTLELELKML (160 aa). An OBG-type G domain is found at 165–335; it reads ADVGLVGFPN…LLQRVAELLR (171 aa). Residues 171–178, 196–200, 217–220, 287–290, and 316–318 contribute to the GTP site; these read GFPNAGKS, FTTLT, DIPG, NKAD, and SAA. Positions 178 and 198 each coordinate Mg(2+). Positions 337–359 are disordered; the sequence is DPPPQRDPVDPDEPPLEWPLPPV. The OCT domain maps to 356-433; sequence LPPVDENAFT…IGRAELVWDD (78 aa).

It belongs to the TRAFAC class OBG-HflX-like GTPase superfamily. OBG GTPase family. As to quaternary structure, monomer. Requires Mg(2+) as cofactor.

Its subcellular location is the cytoplasm. An essential GTPase which binds GTP, GDP and possibly (p)ppGpp with moderate affinity, with high nucleotide exchange rates and a fairly low GTP hydrolysis rate. Plays a role in control of the cell cycle, stress response, ribosome biogenesis and in those bacteria that undergo differentiation, in morphogenesis control. The sequence is that of GTPase Obg from Chloroflexus aggregans (strain MD-66 / DSM 9485).